The chain runs to 423 residues: UBX domain-containing protein 1 (423 aa).

Positions 44-167 (QTDDQKDRRE…EVTDPSDPNS (124 aa)) are disordered. Positions 46-66 (DDQKDRREEAHWNRQQEKALK) are enriched in basic and acidic residues. Positions 69–79 (AFSTNSSNKAI) are enriched in polar residues. Residues 115–130 (SSRSGSGNNSRFMSFS) show a composition bias toward low complexity. Phosphoserine is present on residues Ser128, Ser210, and Ser224. In terms of domain architecture, SEP spans 232–297 (KVTREITFWK…VYKKLDESYK (66 aa)). A Glycyl lysine isopeptide (Lys-Gly) (interchain with G-Cter in ubiquitin) cross-link involves residue Lys241. The tract at residues 299-348 (PTRKLGGFSGQGQRLGSPIPGESSPAEVPKNETPAAQEQPMPDNEPKQGD) is disordered. Ser315, Ser321, and Ser322 each carry phosphoserine. The residue at position 331 (Thr331) is a Phosphothreonine. Residues 344–421 (PKQGDTSIQI…DLLNSVVVQR (78 aa)) enclose the UBX domain.

Forms a complex composed of CDC48, NPL4, UFD1, DOA1, SHP1 and deubiquitinase OTU1. Interacts with CDC48.

The protein resides in the nucleus. The protein localises to the cytoplasm. Its function is as follows. Involved in CDC48-dependent protein degradation through the ubiquitin/proteasome pathway. Direct or indirect positive regulator of GLC7 activity. The polypeptide is UBX domain-containing protein 1 (SHP1) (Saccharomyces cerevisiae (strain ATCC 204508 / S288c) (Baker's yeast)).